Here is a 56-residue protein sequence, read N- to C-terminus: MSGSGAMLLGLLILVAMATSLDTREICWNHSECDDPSEWCCRMGSGHGSCQPVCRP.

The first 23 residues, 1–23 (MSGSGAMLLGLLILVAMATSLDT), serve as a signal peptide directing secretion. 3 disulfide bridges follow: C27–C41, C33–C50, and C40–C54.

As to expression, expressed by the venom duct.

It is found in the secreted. In terms of biological role, probable neurotoxin. The polypeptide is Conotoxin Cal6.41b (Californiconus californicus (California cone)).